The sequence spans 139 residues: Small ribosomal subunit protein bS6 (139 aa).

Residues 119-139 (LKGASKVETPTGPESTDIQEK) are disordered. Positions 130–139 (GPESTDIQEK) are enriched in polar residues.

The protein belongs to the bacterial ribosomal protein bS6 family.

In terms of biological role, binds together with bS18 to 16S ribosomal RNA. The sequence is that of Small ribosomal subunit protein bS6 from Borreliella burgdorferi (strain ZS7) (Borrelia burgdorferi).